The following is an 807-amino-acid chain: Putative AC transposase (807 aa).

Disordered stretches follow at residues 42-140 (GLKR…KKCT) and 785-807 (MDEDEDAIEFSKNNEDVASGSSP). A compositionally biased stretch (polar residues) spans 84 to 98 (QSVSSSNANGTATDP). 10 repeat units span residues 109 to 110 (PQ), 111 to 112 (PQ), 113 to 114 (PQ), 115 to 116 (PQ), 117 to 118 (PE), 119 to 120 (PQ), 121 to 122 (PQ), 123 to 124 (PQ), 125 to 126 (PE), and 127 to 128 (PE). The segment at 109-128 (PQPQPQPQPEPQPQPQPEPE) is 10 X 2 AA tandem repeats of P-[QE]. Over residues 110-125 (QPQPQPQPEPQPQPQP) the composition is skewed to pro residues.

In Zea mays (Maize), this protein is Putative AC transposase.